A 53-amino-acid chain; its full sequence is MLRYAIIFFIIAIIAAVFGFGGIAAGAAEIAKILFYIFVVIFLVTLLLGVVRR.

2 helical membrane-spanning segments follow: residues 5–25 (AIIF…GIAA) and 30–50 (IAKI…LLGV).

It belongs to the UPF0391 family.

Its subcellular location is the cell membrane. In Burkholderia cenocepacia (strain HI2424), this protein is UPF0391 membrane protein Bcen2424_6479.